Consider the following 88-residue polypeptide: MNDSELTQFVTQLLWIVLFTSMPVVLVASVVGVIVSLVQALTQIQDQTLQFMIKLLAIAITLMVSYPWLSGILLNYTRQIMLRIGEHG.

Helical transmembrane passes span 15-35 (WIVLFTSMPVVLVASVVGVIV) and 55-75 (LLAIAITLMVSYPWLSGILLN).

Belongs to the FliQ/MopD/SpaQ family.

It localises to the cell membrane. In terms of biological role, part of a type III secretion system. The protein is Secretion system apparatus protein SsaS (ssaS) of Salmonella typhimurium (strain LT2 / SGSC1412 / ATCC 700720).